The primary structure comprises 77 residues: Secapin (77 aa).

An N-terminal signal peptide occupies residues 1 to 32 (MKNYSKNATYLITVLLFSFVAMLLIIPSKCEA). Positions 33 to 52 (VSNDMQPLEARTADLVQQPR) are excised as a propeptide. Cysteines 61 and 72 form a disulfide.

It belongs to the secapin family. In terms of tissue distribution, expressed by the venom gland.

The protein resides in the secreted. Functionally, nontoxic peptide. The protein is Secapin of Apis cerana cerana (Oriental honeybee).